Consider the following 92-residue polypeptide: Small ribosomal subunit protein uS19c (92 aa).

Belongs to the universal ribosomal protein uS19 family.

It localises to the plastid. The protein resides in the chloroplast. Protein S19 forms a complex with S13 that binds strongly to the 16S ribosomal RNA. The sequence is that of Small ribosomal subunit protein uS19c from Gracilaria tenuistipitata var. liui (Red alga).